Reading from the N-terminus, the 244-residue chain is MNVLANTLKGLYDVSGVEVGQHFYWQIGGFQVHGQVLITSWVVIAILLGSAAIAVRDPQTIPTGGQNFFEYVLEFIRDVSKTQIGEEYGPWVPFIGTLFLFIFVSNWSGALLPWKIIQLPHGELAAPTNDINTTVALALLTSVAYFYAGITKKGLSYFGKYIQPTPILLPINILEDFTKPLSLSFRLFGNILADELVVVVLVSLVPLVVPIPVMFLGLFTSGIQALIFATLAAAYIGESMEGHH.

The next 5 helical transmembrane spans lie at glutamine 35 to valine 55, valine 92 to leucine 112, isoleucine 131 to threonine 151, leucine 196 to leucine 216, and glycine 217 to glycine 237.

It belongs to the ATPase A chain family. As to quaternary structure, F-type ATPases have 2 components, CF(1) - the catalytic core - and CF(0) - the membrane proton channel. CF(1) has five subunits: alpha(3), beta(3), gamma(1), delta(1), epsilon(1). CF(0) has four main subunits: a, b, b' and c.

The protein localises to the plastid. It localises to the chloroplast thylakoid membrane. Functionally, key component of the proton channel; it plays a direct role in the translocation of protons across the membrane. This chain is ATP synthase subunit a, chloroplastic, found in Coffea arabica (Arabian coffee).